A 717-amino-acid polypeptide reads, in one-letter code: SAGA factor-like TAF6 (717 aa).

A sufficient for interaction with Taf9 region spans residues 123–204; that stretch reads KSYAGFDPRS…VPPMLGAMDS (82 aa).

It belongs to the TAF6 family. Component of the Spt-Ada-Gcn5 acetyltransferase (SAGA) complex consisting of wda/Taf5L, Saf6, Taf9, Taf10b, Taf12, Ada1, Spt3, Spt7, Spt20, Sf3b3, Sf3b5, Nipped-A/Tra1, a histone acetyltransferase (HAT) module made up of Gcn5, Ada2b (Isoform B), Ada3 and Sgf29, and a deubiquitinase (DUB) module made up of not/nonstop, Sgf11 and e(y)2 tethered to SAGA by Atxn7; not essential for SAGA complex assembly, histone-modifying activity or chromosomal recruitment. Interacts (via N-terminal histone-fold domain) with Taf9 (via N-terminal histone-fold domain); the interaction is probably direct. Probably forms a histone-like heterooctamer structure with Taf9, Taf12 and Taf10b.

The protein resides in the nucleus. The protein localises to the chromosome. Functionally, component of the transcription regulatory complex SAGA, a multiprotein complex that activates transcription by remodeling chromatin and mediating histone acetylation and deubiquitination. The SAGA complex predominantly acetylates histone H3. Involved in SAGA complex coactivator function but not essential for SAGA complex assembly, histone-modifying activity or chromosomal recruitment. Required for oogenesis; involved in transcriptional activation. The protein is SAGA factor-like TAF6 of Drosophila melanogaster (Fruit fly).